A 311-amino-acid polypeptide reads, in one-letter code: Beta-lactamase (311 aa).

Residues 1-34 (MRLTQAPPSRRTLMTLGAGATMAALLPAGGAAYA) constitute a signal peptide (tat-type signal). Residue Ser-87 is the Acyl-ester intermediate of the active site. Residue 255–257 (KTG) participates in substrate binding.

This sequence belongs to the class-A beta-lactamase family. In terms of processing, predicted to be exported by the Tat system. The position of the signal peptide cleavage has not been experimentally proven.

It catalyses the reaction a beta-lactam + H2O = a substituted beta-amino acid. The sequence is that of Beta-lactamase (bla) from Kitasatospora aureofaciens (Streptomyces aureofaciens).